A 225-amino-acid polypeptide reads, in one-letter code: Suppressor of cytokine signaling 3 (225 aa).

The interval L22–L33 is kinase inhibitory region (KIR). The tract at residues V34–G45 is extended SH2 subdomain (ESS). One can recognise an SH2 domain in the interval F46–E142. Residues P131–E142 are compositionally biased toward pro residues. A disordered region spans residues P131–R162. The segment covering P143–P155 has biased composition (low complexity). The 48-residue stretch at V177 to P224 folds into the SOCS box domain.

Interacts with multiple activated proteins of the tyrosine kinase signaling pathway including IGF1 receptor, insulin receptor and JAK2. Binding to JAK2 is mediated through the KIR and SH2 domains to a phosphorylated tyrosine residue within the JAK2 JH1 domain. Binds specific activated tyrosine residues of the leptin, EPO, IL12, GSCF and gp130 receptors. Interaction with CSNK1E stabilizes SOCS3 protein. Component of the probable ECS(SOCS3) E3 ubiquitin-protein ligase complex which contains CUL5, RNF7/RBX2, Elongin BC complex and SOCS3. Interacts with CUL5, RNF7, ELOB and ELOC. Interacts with CUL2. Interacts with FGFR3. Interacts with INSR. Interacts with BCL10; this interaction may interfere with BCL10-binding with PELI2. Interacts with NOD2 (via CARD domain); the interaction promotes NOD2 degradation. Post-translationally, phosphorylated on tyrosine residues after stimulation by the cytokines, IL-2, EPO or IGF1. Widely expressed with high expression in heart, placenta, skeletal muscle, peripheral blood leukocytes, fetal and adult lung, and fetal liver and kidney. Lower levels in thymus.

It participates in protein modification; protein ubiquitination. Its function is as follows. SOCS family proteins form part of a classical negative feedback system that regulates cytokine signal transduction. SOCS3 is involved in negative regulation of cytokines that signal through the JAK/STAT pathway. Inhibits cytokine signal transduction by binding to tyrosine kinase receptors including IL6ST/gp130, LIF, erythropoietin, insulin, IL12, GCSF and leptin receptors. Binding to JAK2 inhibits its kinase activity and regulates IL6 signaling. Suppresses fetal liver erythropoiesis. Regulates onset and maintenance of allergic responses mediated by T-helper type 2 cells. Probable substrate recognition component of a SCF-like ECS (Elongin BC-CUL2/5-SOCS-box protein) E3 ubiquitin-protein ligase complex which mediates the ubiquitination and subsequent proteasomal degradation of target proteins. The polypeptide is Suppressor of cytokine signaling 3 (Homo sapiens (Human)).